The primary structure comprises 317 residues: Trem-like transcript 1 protein (317 aa).

Positions 1 to 20 are cleaved as a signal peptide; sequence MDCYLLLLLLLLGLAGQGSA. Positions 21 to 122 constitute an Ig-like V-type domain; that stretch reads DSHPEVLQAP…PQTLHRVSLL (102 aa). Topologically, residues 21 to 175 are extracellular; the sequence is DSHPEVLQAP…EFRRRENSIP (155 aa). 2 disulfide bridges follow: cysteine 39-cysteine 105 and cysteine 53-cysteine 60. The tract at residues 147–166 is disordered; it reads TGSLLEDPSLDPSASAGPHE. The chain crosses the membrane as a helical span at residues 176–196; that stretch reads LIWGAVLLLALVVVAVVIFAV. The Cytoplasmic segment spans residues 197–317; that stretch reads MARKKGNRLV…PPNSQTPPSK (121 aa). Cysteine 208 carries the S-palmitoyl cysteine lipid modification. Residues 212-278 form a disordered region; that stretch reads QSTGVPGMDP…SQPPLPPKVL (67 aa). Positions 261–275 are enriched in pro residues; that stretch reads SSEPPAPPSQPPLPP. Serine 283 is subject to Phosphoserine. The ITIM motif lies at 284–289; that stretch reads VTYATV. The segment at 295-317 is disordered; the sequence is DKGKIASCEPVQDPPNSQTPPSK. The segment covering 308-317 has biased composition (polar residues); it reads PPNSQTPPSK.

In terms of assembly, when phosphorylated, interacts with PTPN11. When phosphorylated, interacts with PTPN6. Post-translationally, phosphorylated on tyrosine residues. Highly expressed in bone marrow leukocytes, splenic megakaryocytes and platelets. Detected in brain, liver and in peritoneal monocytes.

Its subcellular location is the cell membrane. It localises to the cytoplasm. In terms of biological role, cell surface receptor that may play a role in the innate and adaptive immune response. This is Trem-like transcript 1 protein (Treml1) from Mus musculus (Mouse).